Consider the following 310-residue polypeptide: Olfactory receptor 5P1 (310 aa).

At 1–25 (MEPGNHTAVTKFILLGLTDDPTLCV) the chain is on the extracellular side. The N-linked (GlcNAc...) asparagine glycan is linked to Asn5. Residues 26 to 46 (IFFVFFLGIYIVTLVGNISII) form a helical membrane-spanning segment. The Cytoplasmic portion of the chain corresponds to 47-54 (NLVRSCPQ). The chain crosses the membrane as a helical span at residues 55–75 (LQTPMYMFLSHLAFVDIGYST). At 76–99 (SVTPIMLIGFIVHETGLPVHACEA) the chain is on the extracellular side. An intrachain disulfide couples Cys97 to Cys189. The chain crosses the membrane as a helical span at residues 100–120 (QLCSVVTFGTAECFLLAAMAY). Over 121–133 (DRYVAICSPLLYS) the chain is Cytoplasmic. Residues 134–154 (THMSSQICLLLVGASYVGGCV) form a helical membrane-spanning segment. Topologically, residues 155-196 (NAWTFTGCLLSLSFCGPNKIDHFFCDFSPLLKLSCSDVSIIG) are extracellular. The helical transmembrane segment at 197–217 (IIPSISAGSIIVVTVFVISVS) threads the bilayer. At 218 to 237 (YIYILITILKMRSTEGRHKA) the chain is on the cytoplasmic side. A helical membrane pass occupies residues 238–258 (FSTCTSHLTAVTLYYGTITFI). At 259–271 (YVMPKSSYSTKQN) the chain is on the extracellular side. A helical transmembrane segment spans residues 272-292 (RVVSLFYTVVIPMLNPLIYSL). Topologically, residues 293–310 (RNRDVKEALRKATLRIYS) are cytoplasmic.

It belongs to the G-protein coupled receptor 1 family.

The protein localises to the cell membrane. Functionally, potential odorant receptor. This chain is Olfactory receptor 5P1, found in Mus musculus (Mouse).